The chain runs to 277 residues: Large ribosomal subunit protein mL46 (277 aa).

Lys-217 carries the N6-succinyllysine modification. Lys-228 bears the N6-acetyllysine mark. At Lys-246 the chain carries N6-succinyllysine.

It belongs to the mitochondrion-specific ribosomal protein mL46 family. As to quaternary structure, component of the mitochondrial ribosome large subunit (39S) which comprises a 16S rRNA and about 50 distinct proteins.

It is found in the mitochondrion. In Rattus norvegicus (Rat), this protein is Large ribosomal subunit protein mL46 (Mrpl46).